Consider the following 876-residue polypeptide: Valine--tRNA ligase (876 aa).

Residues 44–54 carry the 'HIGH' region motif; sequence PNVTGKLHLGH. The 'KMSKS' region signature appears at 520-524; it reads KMSKS. Position 523 (lysine 523) interacts with ATP. A coiled-coil region spans residues 805-876; that stretch reads LEGLIDMDKE…VKARIEQLKA (72 aa).

The protein belongs to the class-I aminoacyl-tRNA synthetase family. ValS type 1 subfamily. Monomer.

Its subcellular location is the cytoplasm. It catalyses the reaction tRNA(Val) + L-valine + ATP = L-valyl-tRNA(Val) + AMP + diphosphate. Its function is as follows. Catalyzes the attachment of valine to tRNA(Val). As ValRS can inadvertently accommodate and process structurally similar amino acids such as threonine, to avoid such errors, it has a 'posttransfer' editing activity that hydrolyzes mischarged Thr-tRNA(Val) in a tRNA-dependent manner. In Staphylococcus aureus (strain Mu3 / ATCC 700698), this protein is Valine--tRNA ligase.